Here is a 184-residue protein sequence, read N- to C-terminus: Bacterial microcompartment shell protein PduT (184 aa).

BMC domains follow at residues 4 to 86 and 96 to 182; these read AIGI…PAIS and AVGI…RQMV. Cysteine 38 provides a ligand contact to [4Fe-4S] cluster.

This sequence belongs to the bacterial microcompartments protein family. In terms of assembly, homotrimerizes to form a pseudohexamer with a large central pore, which is probably the binding site for the [4Fe-4S] center. Interacts with PduS. Originally suggested to be a homotetramer; this is incorrect. [4Fe-4S] cluster serves as cofactor.

It localises to the bacterial microcompartment. It participates in polyol metabolism; 1,2-propanediol degradation. Its function is as follows. A minor shell protein of the bacterial microcompartment (BMC) dedicated to 1,2-propanediol (1,2-PD) degradation. Overexpression of this protein leads to cells with either deposits or having lamina-like structures in the cytoplasm. Not absolutely required to make artificial BMCs. May selectively transport specific metabolites. In terms of biological role, expression of a cosmid containing the full 21-gene pdu operon in E.coli allows E.coli to grow on 1,2-propanediol (1,2-PD) with the appearance of bacterial microcompartments (BMC) in its cytoplasm. The 1,2-PD-specific bacterial microcompartment (BMC) concentrates low levels of 1,2-PD catabolic enzymes, concentrates volatile reaction intermediates thus enhancing pathway flux and keeps the level of toxic, mutagenic propionaldehyde low. The sequence is that of Bacterial microcompartment shell protein PduT from Citrobacter freundii.